Consider the following 256-residue polypeptide: 5'-nucleotidase SurE (256 aa).

4 residues coordinate a divalent metal cation: Asp8, Asp9, Ser40, and Asn92.

This sequence belongs to the SurE nucleotidase family. It depends on a divalent metal cation as a cofactor.

The protein resides in the cytoplasm. The enzyme catalyses a ribonucleoside 5'-phosphate + H2O = a ribonucleoside + phosphate. Functionally, nucleotidase that shows phosphatase activity on nucleoside 5'-monophosphates. The chain is 5'-nucleotidase SurE from Sinorhizobium fredii (strain NBRC 101917 / NGR234).